Here is a 374-residue protein sequence, read N- to C-terminus: Tuliposide A-converting enzyme b3, amyloplastic (374 aa).

Residues 1–68 (MSAALFCGPP…TNSSLSPSPT (68 aa)) constitute an amyloplast transit peptide. Catalysis depends on serine 226, which acts as the Acyl-ester intermediate. Active-site charge relay system residues include aspartate 316 and histidine 348.

It belongs to the AB hydrolase superfamily. As to quaternary structure, homodimer. As to expression, highly expressed in pistil and bulb scales. Lower expression in stem, and barely detected in root, leaf, petal and stamen.

It localises to the plastid. The protein localises to the amyloplast. The enzyme catalyses 6-tuliposide A = tulipalin A + D-glucose. Its function is as follows. Lactone-forming carboxylesterases, specifically catalyzing intramolecular transesterification, but not hydrolysis. Involved in the biosynthesis of tulipalins, defensive chemicals that show antimicrobial activities against a broad range of strains of bacteria and fungi. Substrates are 6-tuliposide A &gt; 6-tuliposide B. The polypeptide is Tuliposide A-converting enzyme b3, amyloplastic (TCEA-B3) (Tulipa gesneriana (Garden tulip)).